We begin with the raw amino-acid sequence, 147 residues long: uncharacterized protein (147 aa).

The protein belongs to the limonene-1,2-epoxide hydrolase family.

This is an uncharacterized protein from Bacillus subtilis (strain 168).